The primary structure comprises 509 residues: Angiopoietin-4 (509 aa).

The N-terminal stretch at 1–21 (MLCQPAMLLDGLLLLATMAAA) is a signal peptide. N-linked (GlcNAc...) asparagine glycosylation is found at N105, N135, N149, N167, N256, N306, N317, and N417. A coiled-coil region spans residues 181 to 269 (LSTNKLERQM…LQQQQQQLTE (89 aa)). The region spanning 288–508 (KTPKPVFQDC…GTRMMLRPMG (221 aa)) is the Fibrinogen C-terminal domain. A disulfide bridge connects residues C297 and C326. The disordered stretch occupies residues 416-436 (VNDSSSSAGRKNSLAPQGTKF). Cysteines 450 and 463 form a disulfide.

In terms of assembly, homodimer; disulfide-linked. Interacts with TEK/TIE2. Widely expressed.

It is found in the secreted. In terms of biological role, binds to TEK/TIE2, modulating ANGPT1 signaling. Can induce tyrosine phosphorylation of TEK/TIE2. Promotes endothelial cell survival, migration and angiogenesis. In Mus musculus (Mouse), this protein is Angiopoietin-4 (Angpt4).